Consider the following 117-residue polypeptide: MDMRVPAQLLGLLLLWFPGARCDIQMTQSPSSLSASVGDRVTITCRASQGIRNDLGWYQQKPGKAPKRLIYAASSLQSGVPSRFSGSGSGTEFTLTISSLQPEDFATYYCLQHNSYP.

The N-terminal stretch at 1-22 (MDMRVPAQLLGLLLLWFPGARC) is a signal peptide. The segment at 23-45 (DIQMTQSPSSLSASVGDRVTITC) is framework-1. The Ig-like domain occupies 24–117 (IQMTQSPSSL…YYCLQHNSYP (94 aa)). A disulfide bridge links Cys45 with Cys110. Residues 46-56 (RASQGIRNDLG) form a complementarity-determining-1 region. Positions 57–71 (WYQQKPGKAPKRLIY) are framework-2. A complementarity-determining-2 region spans residues 72–78 (AASSLQS). The segment at 79–110 (GVPSRFSGSGSGTEFTLTISSLQPEDFATYYC) is framework-3. A complementarity-determining-3 region spans residues 111–117 (LQHNSYP).

As to quaternary structure, immunoglobulins are composed of two identical heavy chains and two identical light chains; disulfide-linked.

It localises to the secreted. The protein localises to the cell membrane. Functionally, v region of the variable domain of immunoglobulin light chains that participates in the antigen recognition. Immunoglobulins, also known as antibodies, are membrane-bound or secreted glycoproteins produced by B lymphocytes. In the recognition phase of humoral immunity, the membrane-bound immunoglobulins serve as receptors which, upon binding of a specific antigen, trigger the clonal expansion and differentiation of B lymphocytes into immunoglobulins-secreting plasma cells. Secreted immunoglobulins mediate the effector phase of humoral immunity, which results in the elimination of bound antigens. The antigen binding site is formed by the variable domain of one heavy chain, together with that of its associated light chain. Thus, each immunoglobulin has two antigen binding sites with remarkable affinity for a particular antigen. The variable domains are assembled by a process called V-(D)-J rearrangement and can then be subjected to somatic hypermutations which, after exposure to antigen and selection, allow affinity maturation for a particular antigen. The sequence is that of Immunoglobulin kappa variable 1-17 from Homo sapiens (Human).